Consider the following 195-residue polypeptide: MSIDTKAIEKHIRGILIALGDDPDREGLKETPKRVAKMYEEVFKGMEYSNDDIAEMFNKTFEEDLKESEEDNIVLVKDIEIFSHCEHHLTLMYNMTVAVAYIPNKRLIGLSKIARIADMVSRRLQLQERIGKDIAEIMEKVTASKDIAVIIKGEHGCMTSRGIKKPGALTTTMTLKGRFKNDDSLVTKLMALYKA.

Residues Cys-85, His-88, and Cys-157 each contribute to the Zn(2+) site.

The protein belongs to the GTP cyclohydrolase I family. In terms of assembly, toroid-shaped homodecamer, composed of two pentamers of five dimers.

It carries out the reaction GTP + H2O = 7,8-dihydroneopterin 3'-triphosphate + formate + H(+). It functions in the pathway cofactor biosynthesis; 7,8-dihydroneopterin triphosphate biosynthesis; 7,8-dihydroneopterin triphosphate from GTP: step 1/1. The chain is GTP cyclohydrolase 1 from Clostridium acetobutylicum (strain ATCC 824 / DSM 792 / JCM 1419 / IAM 19013 / LMG 5710 / NBRC 13948 / NRRL B-527 / VKM B-1787 / 2291 / W).